The following is a 326-amino-acid chain: Phosphate acyltransferase (326 aa).

Belongs to the PlsX family. As to quaternary structure, homodimer. Probably interacts with PlsY.

The protein localises to the cytoplasm. The catalysed reaction is a fatty acyl-[ACP] + phosphate = an acyl phosphate + holo-[ACP]. It participates in lipid metabolism; phospholipid metabolism. Catalyzes the reversible formation of acyl-phosphate (acyl-PO(4)) from acyl-[acyl-carrier-protein] (acyl-ACP). This enzyme utilizes acyl-ACP as fatty acyl donor, but not acyl-CoA. This chain is Phosphate acyltransferase, found in Macrococcus caseolyticus (strain JCSC5402) (Macrococcoides caseolyticum).